The sequence spans 453 residues: L-cysteine:1D-myo-inositol 2-amino-2-deoxy-alpha-D-glucopyranoside ligase (453 aa).

Cys58 is a Zn(2+) binding site. Residues 58–61, Thr73, and 96–98 each bind L-cysteinyl-5'-AMP; these read CGIT and NVT. The 'HIGH' region motif lies at 60–70; it reads ITPYDATHMGH. The 'ERGGDP' region motif lies at 221-226; the sequence is ERGGDP. Trp262 serves as a coordination point for L-cysteinyl-5'-AMP. Zn(2+) is bound at residue Cys266. 284-286 is a binding site for L-cysteinyl-5'-AMP; sequence GND. His291 contributes to the Zn(2+) binding site. An L-cysteinyl-5'-AMP-binding site is contributed by Val317. The 'KMSKS' region signature appears at 323–327; sequence KMSKS.

Belongs to the class-I aminoacyl-tRNA synthetase family. MshC subfamily. In terms of assembly, monomer. The cofactor is Zn(2+).

The catalysed reaction is 1D-myo-inositol 2-amino-2-deoxy-alpha-D-glucopyranoside + L-cysteine + ATP = 1D-myo-inositol 2-(L-cysteinylamino)-2-deoxy-alpha-D-glucopyranoside + AMP + diphosphate + H(+). Catalyzes the ATP-dependent condensation of GlcN-Ins and L-cysteine to form L-Cys-GlcN-Ins. The polypeptide is L-cysteine:1D-myo-inositol 2-amino-2-deoxy-alpha-D-glucopyranoside ligase (Rothia mucilaginosa (strain DY-18) (Stomatococcus mucilaginosus)).